The sequence spans 502 residues: Probable cytosol aminopeptidase (502 aa).

K258 and D263 together coordinate Mn(2+). The active site involves K270. Mn(2+) contacts are provided by D281, D340, and E342. The active site involves R344.

The protein belongs to the peptidase M17 family. Mn(2+) serves as cofactor.

The protein resides in the cytoplasm. The enzyme catalyses Release of an N-terminal amino acid, Xaa-|-Yaa-, in which Xaa is preferably Leu, but may be other amino acids including Pro although not Arg or Lys, and Yaa may be Pro. Amino acid amides and methyl esters are also readily hydrolyzed, but rates on arylamides are exceedingly low.. The catalysed reaction is Release of an N-terminal amino acid, preferentially leucine, but not glutamic or aspartic acids.. In terms of biological role, presumably involved in the processing and regular turnover of intracellular proteins. Catalyzes the removal of unsubstituted N-terminal amino acids from various peptides. In Clavibacter michiganensis subsp. michiganensis (strain NCPPB 382), this protein is Probable cytosol aminopeptidase.